The chain runs to 394 residues: MGCLGNSKTEDQRNEEKAQREANKKIEKQLQKDKQVYRATHRLLLLGAGESGKSTIVKQMRILHVNGFNGEGGEEDPQAARSNSDGEKATKVQDIKNNLKEAIETIVAAMSNLVPPVELANPENQFRVDYILSVMNVPNFDFPPEFYEHAKALWEDEGVRACYERSNEYQLIDCAQYFLDKIDVIKQADYVPSDQDLLRCRVLTSGIFETKFQVDKVNFHMFDVGGQRDERRKWIQCFNDVTAIIFVVASSSYNMVIREDNQTNRLQEALNLFKSIWNNRWLRTISVILFLNKQDLLAEKVLAGKSKIEDYFPEFARYTTPEDATPEPGEDPRVTRAKYFIRDEFLRISTASGDGRHYCYPHFTCAVDTENIRRVFNDCRDIIQRMHLRQYELL.

Residues 1–23 (MGCLGNSKTEDQRNEEKAQREAN) are disordered. G2 carries the N-palmitoyl glycine lipid modification. A lipid anchor (S-palmitoyl cysteine) is attached at C3. Residues 8-23 (KTEDQRNEEKAQREAN) are compositionally biased toward basic and acidic residues. Residues 39–394 (ATHRLLLLGA…RMHLRQYELL (356 aa)) form the G-alpha domain. The tract at residues 42-55 (RLLLLGAGESGKST) is G1 motif. A GTP-binding site is contributed by 47–55 (GAGESGKST). S54 contacts Mg(2+). The disordered stretch occupies residues 68–90 (FNGEGGEEDPQAARSNSDGEKAT). A G2 motif region spans residues 196–204 (DLLRCRVLT). GTP-binding positions include 197–204 (LLRCRVLT), 223–227 (DVGGQ), and 292–295 (NKQD). Mg(2+) is bound at residue T204. Positions 219–228 (FHMFDVGGQR) are G3 motif. Residues 288-295 (ILFLNKQD) form a G4 motif region. Residue K300 forms a Glycyl lysine isopeptide (Lys-Gly) (interchain with G-Cter in ubiquitin) linkage. Phosphoserine is present on S352. Residues 364 to 369 (TCAVDT) form a G5 motif region. A366 contributes to the GTP binding site.

The protein belongs to the G-alpha family. G(s) subfamily. Heterotrimeric G proteins are composed of 3 units; alpha, beta and gamma. The alpha chain contains the guanine nucleotide binding site. Component of the TAS2R14-GNAS2 complex, consisting of TAS2R14, GNAS2, GNB1 and GNG2; within the complex interacts with TAS2R14; this complex plays a role in the perception of bitterness. Interacts with CRY1; the interaction may block GPCR-mediated regulation of cAMP concentrations. Interacts with ADCY6 and stimulates its adenylyl cyclase activity. Interacts with ADCY2 and ADCY5. Interacts (GDP-bound form) with RIC8B; promoting GNAS folding and association with the plasma membrane. Stimulates the ADCY5 adenylyl cyclase activity. Interaction with SASH1. Interacts with GASL2L2.

The protein resides in the cell membrane. The catalysed reaction is GTP + H2O = GDP + phosphate + H(+). Functionally, guanine nucleotide-binding proteins (G proteins) function as transducers in numerous signaling pathways controlled by G protein-coupled receptors (GPCRs). The alpha chain contains the guanine nucleotide binding site and alternates between an active, GTP-bound state and an inactive, GDP-bound state. Signaling by an activated GPCR promotes GDP release and GTP binding. The alpha subunit has a low GTPase activity that converts bound GTP to GDP, thereby terminating the signal. Both GDP release and GTP hydrolysis are modulated by numerous regulatory proteins. Signaling involves the activation of adenylyl cyclases, resulting in increased levels of the signaling molecule cAMP. Functions downstream of beta-adrenergic receptors. Stimulates the Ras signaling pathway via RAPGEF2. The sequence is that of Guanine nucleotide-binding protein G(s) subunit alpha isoforms short (Gnas) from Mus musculus (Mouse).